A 225-amino-acid chain; its full sequence is Leucyl/phenylalanyl-tRNA--protein transferase (225 aa).

It belongs to the L/F-transferase family.

The protein resides in the cytoplasm. The catalysed reaction is N-terminal L-lysyl-[protein] + L-leucyl-tRNA(Leu) = N-terminal L-leucyl-L-lysyl-[protein] + tRNA(Leu) + H(+). It carries out the reaction N-terminal L-arginyl-[protein] + L-leucyl-tRNA(Leu) = N-terminal L-leucyl-L-arginyl-[protein] + tRNA(Leu) + H(+). The enzyme catalyses L-phenylalanyl-tRNA(Phe) + an N-terminal L-alpha-aminoacyl-[protein] = an N-terminal L-phenylalanyl-L-alpha-aminoacyl-[protein] + tRNA(Phe). Its function is as follows. Functions in the N-end rule pathway of protein degradation where it conjugates Leu, Phe and, less efficiently, Met from aminoacyl-tRNAs to the N-termini of proteins containing an N-terminal arginine or lysine. The polypeptide is Leucyl/phenylalanyl-tRNA--protein transferase (Gluconobacter oxydans (strain 621H) (Gluconobacter suboxydans)).